The following is a 108-amino-acid chain: U3-lycotoxin-Ls1w (108 aa).

The first 20 residues, 1–20 (MKFVLLFGVLLVTLFSYSSA), serve as a signal peptide directing secretion. The propeptide occupies 21–44 (EMLDDFDQADEDELLSLIEKEEAR). 4 cysteine pairs are disulfide-bonded: cysteine 48–cysteine 63, cysteine 55–cysteine 72, cysteine 62–cysteine 87, and cysteine 74–cysteine 85.

The protein belongs to the neurotoxin 19 (CSTX) family. 01 subfamily. In terms of tissue distribution, expressed by the venom gland.

The protein resides in the secreted. The protein is U3-lycotoxin-Ls1w of Lycosa singoriensis (Wolf spider).